Reading from the N-terminus, the 646-residue chain is Glutamine--tRNA ligase protein virJ (646 aa).

The segment at asparagine 25 to glutamate 65 is disordered. A compositionally biased stretch (low complexity) spans alanine 38 to alanine 61. Positions proline 98–histidine 108 match the 'HIGH' region motif. ATP is bound by residues glutamate 99–asparagine 101 and histidine 105–alanine 111. Aspartate 147 and tyrosine 296 together coordinate L-glutamine. ATP-binding positions include threonine 315, arginine 344–leucine 345, and methionine 352–lysine 354. A 'KMSKS' region motif is present at residues isoleucine 351 to arginine 355.

It belongs to the class-I aminoacyl-tRNA synthetase family.

It carries out the reaction tRNA(Gln) + L-glutamine + ATP = L-glutaminyl-tRNA(Gln) + AMP + diphosphate. In terms of biological role, glutamine--tRNA ligase; part of the gene cluster that mediates the biosynthesis of virensols and trichoxide, fungal natural products that contain or are derived from a salicylaldehyde core. VirJ does not seem to play any role in virensols and trichoxide biosynthesis. In Hypocrea virens (strain Gv29-8 / FGSC 10586) (Gliocladium virens), this protein is Glutamine--tRNA ligase protein virJ.